Reading from the N-terminus, the 553-residue chain is ATP synthase F(1) complex subunit alpha, mitochondrial (553 aa).

A mitochondrion-targeting transit peptide spans 1 to 43; it reads MLSVRVAAAVVRALPRRAGLVSRNALGSSFIAARNFHASNTHL. Ser-53 and Ser-65 each carry phosphoserine. Position 76 is a phosphoserine; alternate (Ser-76). A glycan (O-linked (GlcNAc) serine; alternate) is linked at Ser-76. Ser-106 carries the phosphoserine modification. N6-acetyllysine is present on residues Lys-123, Lys-126, and Lys-132. Thr-134 is modified (phosphothreonine). Lys-161 is modified (N6-acetyllysine; alternate). Residue Lys-161 is modified to N6-succinyllysine; alternate. The residue at position 166 (Ser-166) is a Phosphoserine. Lys-167 is modified (N6-acetyllysine; alternate). Lys-167 is modified (N6-succinyllysine; alternate). Residue Ser-184 is modified to Phosphoserine. Arg-204 carries the post-translational modification Omega-N-methylarginine. Residues Gln-215, Gly-217, Lys-218, Thr-219, and Ser-220 each coordinate ATP. Thr-219 is a binding site for Mg(2+). Lys-230 and Lys-239 each carry N6-acetyllysine; alternate. N6-succinyllysine; alternate occurs at positions 230 and 239. Lys-240 bears the N6-acetyllysine mark. N6-acetyllysine; alternate is present on residues Lys-261 and Lys-305. N6-succinyllysine; alternate is present on residues Lys-261 and Lys-305. Asp-312 lines the Mg(2+) pocket. Lys-427 carries the N6-acetyllysine; alternate modification. Lys-427 carries the post-translational modification N6-succinyllysine; alternate. An N6-acetyllysine modification is found at Lys-434. Gln-473 and Gln-475 together coordinate ATP. N6-acetyllysine; alternate occurs at positions 498, 506, 531, and 539. N6-succinyllysine; alternate occurs at positions 498, 506, 531, and 539. Position 541 is an N6-acetyllysine (Lys-541).

This sequence belongs to the ATPase alpha/beta chains family. In terms of assembly, homotrimer. Component of the ATP synthase complex composed at least of ATP5F1A/subunit alpha, ATP5F1B/subunit beta, ATP5MC1/subunit c (homooctomer), MT-ATP6/subunit a, MT-ATP8/subunit 8, ATP5ME/subunit e, ATP5MF/subunit f, ATP5MG/subunit g, ATP5MK/subunit k, ATP5MJ/subunit j, ATP5F1C/subunit gamma, ATP5F1D/subunit delta, ATP5F1E/subunit epsilon, ATP5PF/subunit F6, ATP5PB/subunit b, ATP5PD/subunit d, ATP5PO/subunit OSCP. ATP synthase complex consists of a soluble F(1) head domain (subunits alpha(3) and beta(3)) - the catalytic core - and a membrane F(0) domain - the membrane proton channel (subunits c, a, 8, e, f, g, k and j). These two domains are linked by a central stalk (subunits gamma, delta, and epsilon) rotating inside the F1 region and a stationary peripheral stalk (subunits F6, b, d, and OSCP). Interacts with ATPAF2. Interacts with HRG; the interaction occurs on the surface of T-cells and alters the cell morphology when associated with concanavalin (in vitro). Interacts with PLG (angiostatin peptide); the interaction inhibits most of the angiogenic properties of angiostatin. Interacts with BLOC1S1. Interacts with BCL2L1 isoform BCL-X(L); the interaction mediates the association of BCL2L1 isoform BCL-X(L) with the mitochondrial membrane F(1)F(0) ATP synthase and enhances neurons metabolic efficiency. Interacts with CLN5 and PPT1. Interacts with S100A1; this interaction increases F1-ATPase activity. Interacts with ABCB7; this interaction allows the regulation of cellular iron homeostasis and cellular reactive oxygen species (ROS) levels in cardiomyocytes. In terms of processing, acetylated on lysine residues. BLOC1S1 is required for acetylation.

It localises to the mitochondrion inner membrane. The protein resides in the cell membrane. Its function is as follows. Subunit alpha, of the mitochondrial membrane ATP synthase complex (F(1)F(0) ATP synthase or Complex V) that produces ATP from ADP in the presence of a proton gradient across the membrane which is generated by electron transport complexes of the respiratory chain. ATP synthase complex consist of a soluble F(1) head domain - the catalytic core - and a membrane F(1) domain - the membrane proton channel. These two domains are linked by a central stalk rotating inside the F(1) region and a stationary peripheral stalk. During catalysis, ATP synthesis in the catalytic domain of F(1) is coupled via a rotary mechanism of the central stalk subunits to proton translocation. In vivo, can only synthesize ATP although its ATP hydrolase activity can be activated artificially in vitro. With the catalytic subunit beta (ATP5F1B), forms the catalytic core in the F(1) domain. Subunit alpha does not bear the catalytic high-affinity ATP-binding sites. This Pongo abelii (Sumatran orangutan) protein is ATP synthase F(1) complex subunit alpha, mitochondrial.